The chain runs to 589 residues: Proline--tRNA ligase (589 aa).

It belongs to the class-II aminoacyl-tRNA synthetase family. ProS type 1 subfamily. In terms of assembly, homodimer.

It is found in the cytoplasm. It catalyses the reaction tRNA(Pro) + L-proline + ATP = L-prolyl-tRNA(Pro) + AMP + diphosphate. Its function is as follows. Catalyzes the attachment of proline to tRNA(Pro) in a two-step reaction: proline is first activated by ATP to form Pro-AMP and then transferred to the acceptor end of tRNA(Pro). As ProRS can inadvertently accommodate and process non-cognate amino acids such as alanine and cysteine, to avoid such errors it has two additional distinct editing activities against alanine. One activity is designated as 'pretransfer' editing and involves the tRNA(Pro)-independent hydrolysis of activated Ala-AMP. The other activity is designated 'posttransfer' editing and involves deacylation of mischarged Ala-tRNA(Pro). The misacylated Cys-tRNA(Pro) is not edited by ProRS. The protein is Proline--tRNA ligase of Corynebacterium aurimucosum (strain ATCC 700975 / DSM 44827 / CIP 107346 / CN-1) (Corynebacterium nigricans).